The following is an 82-amino-acid chain: Toxin GTx1-15 (82 aa).

A signal peptide spans 1–21; it reads MKTSVVFVIAGLALLSVACYA. Positions 22–46 are excised as a propeptide; sequence SELKEQSSINEVLSTIFHFEQPEER. 3 disulfides stabilise this stretch: cysteine 48-cysteine 63, cysteine 55-cysteine 69, and cysteine 62-cysteine 76. At phenylalanine 80 the chain carries Phenylalanine amide.

It belongs to the neurotoxin 10 (Hwtx-1) family. 08 (Gtx1-15) subfamily. As to expression, expressed by the venom gland.

Its subcellular location is the secreted. In terms of biological role, potent voltage-gated sodium channel blocker. Potently inhibits the voltage-gated sodium channels Nav1.7/SCN9A (IC(50)=0.58-10 nM). Shows a moderate activity on Nav1.1/SCN1A (IC(50)=6 nM), Nav1.2/SCN2A (IC(50)=5-128 nM), Nav1.3/SCN3A (IC(50)=20.3-170 nM), and Nav1.6/SCN8A (IC(50)=17-20.1 nM). Shows an unclear inhibition of Nav1.4/SCN4A (IC(50)=200 nM to &gt;10 uM), Nav1.5/SCN5A (IC(50)=140 nM to &gt;10 uM) and Nav1.8/SCN10A (IC(50)=68-12200 nM). Weakly blocks the low voltage-gated calcium channels Cav3.1/CACNA1G (30% inhibition of the peak current by 9.8 nM of the toxin). It shows moderate affinity for lipid bilayers. This is Toxin GTx1-15 from Grammostola rosea (Chilean rose tarantula).